The chain runs to 313 residues: Phenylalanine-4-hydroxylase (313 aa).

H154, H159, and E200 together coordinate Fe cation.

The protein belongs to the biopterin-dependent aromatic amino acid hydroxylase family. It depends on Fe(2+) as a cofactor.

It catalyses the reaction (6R)-L-erythro-5,6,7,8-tetrahydrobiopterin + L-phenylalanine + O2 = (4aS,6R)-4a-hydroxy-L-erythro-5,6,7,8-tetrahydrobiopterin + L-tyrosine. Its pathway is amino-acid degradation; L-phenylalanine degradation; acetoacetate and fumarate from L-phenylalanine: step 1/6. The chain is Phenylalanine-4-hydroxylase (phhA) from Ralstonia nicotianae (strain ATCC BAA-1114 / GMI1000) (Ralstonia solanacearum).